We begin with the raw amino-acid sequence, 104 residues long: Large ribosomal subunit protein uL23 (104 aa).

It belongs to the universal ribosomal protein uL23 family. In terms of assembly, part of the 50S ribosomal subunit. Contacts protein L29, and trigger factor when it is bound to the ribosome.

In terms of biological role, one of the early assembly proteins it binds 23S rRNA. One of the proteins that surrounds the polypeptide exit tunnel on the outside of the ribosome. Forms the main docking site for trigger factor binding to the ribosome. In Burkholderia multivorans (strain ATCC 17616 / 249), this protein is Large ribosomal subunit protein uL23.